The sequence spans 262 residues: Tryptophan synthase alpha chain (262 aa).

Residues E51 and D62 each act as proton acceptor in the active site.

This sequence belongs to the TrpA family. Tetramer of two alpha and two beta chains.

The enzyme catalyses (1S,2R)-1-C-(indol-3-yl)glycerol 3-phosphate + L-serine = D-glyceraldehyde 3-phosphate + L-tryptophan + H2O. It participates in amino-acid biosynthesis; L-tryptophan biosynthesis; L-tryptophan from chorismate: step 5/5. The alpha subunit is responsible for the aldol cleavage of indoleglycerol phosphate to indole and glyceraldehyde 3-phosphate. This Oceanobacillus iheyensis (strain DSM 14371 / CIP 107618 / JCM 11309 / KCTC 3954 / HTE831) protein is Tryptophan synthase alpha chain.